The sequence spans 488 residues: Pup--protein ligase (488 aa).

A Mg(2+)-binding site is contributed by glutamate 34. Residue arginine 77 participates in ATP binding. Mg(2+) is bound at residue tyrosine 79. Aspartate 81 serves as the catalytic Proton acceptor. Mg(2+) is bound at residue glutamate 87. Positions 90 and 453 each coordinate ATP.

The protein belongs to the Pup ligase/Pup deamidase family. Pup-conjugating enzyme subfamily.

The catalysed reaction is ATP + [prokaryotic ubiquitin-like protein]-L-glutamate + [protein]-L-lysine = ADP + phosphate + N(6)-([prokaryotic ubiquitin-like protein]-gamma-L-glutamyl)-[protein]-L-lysine.. Its pathway is protein degradation; proteasomal Pup-dependent pathway. It participates in protein modification; protein pupylation. In terms of biological role, catalyzes the covalent attachment of the prokaryotic ubiquitin-like protein modifier Pup to the proteasomal substrate proteins, thereby targeting them for proteasomal degradation. This tagging system is termed pupylation. The ligation reaction involves the side-chain carboxylate of the C-terminal glutamate of Pup and the side-chain amino group of a substrate lysine. In Bifidobacterium dentium (strain ATCC 27534 / DSM 20436 / JCM 1195 / Bd1), this protein is Pup--protein ligase.